The primary structure comprises 270 residues: GTP cyclohydrolase FolE2 2 (270 aa).

This sequence belongs to the GTP cyclohydrolase IV family.

The enzyme catalyses GTP + H2O = 7,8-dihydroneopterin 3'-triphosphate + formate + H(+). The protein operates within cofactor biosynthesis; 7,8-dihydroneopterin triphosphate biosynthesis; 7,8-dihydroneopterin triphosphate from GTP: step 1/1. Its function is as follows. Converts GTP to 7,8-dihydroneopterin triphosphate. The protein is GTP cyclohydrolase FolE2 2 of Dechloromonas aromatica (strain RCB).